We begin with the raw amino-acid sequence, 695 residues long: MSEEKASSPSGKMDGEKPLNPWPEYINTRLDMYHKLKAEHDSILAEKAAKDSKPIKVTLPDGKQVDAESWKTTPYQIACGISQGLADNTVVAKVNKVVWDLDRPLETDCTLELLKFEDEEAQAVYWHSSAHIMGEAMERVYGGCLCYGPPIENGFYYDMYLEEGGVSSNDFSSLETLCKKIIKEKQTFERLEVKKETLLEMFKYNKFKCRILNEKVNTPTTTVYRCGPLIDLCRGPHVRHTGKIKTLKIHKNSSTYWEGKADMETLQRIYGISFPDPKLLKEWEKFQEEAKNRDHRKIGRDQELYFFHELSPGSCFFLPKGAYIYNTLMEFIRSEYRKRGFQEVVTPNIFNSRLWMTSGHWQHYSENMFSFEVEKEQFALKPMNCPGHCLMFDHRPRSWRELPLRLADFGVLHRNELSGALTGLTRVRRFQQDDAHIFCAMEQIEDEIKGCLDFLRTVYSVFGFSFKLNLSTRPEKFLGDIEIWNQAEKQLENSLNEFGEKWELNPGDGAFYGPKIDIQIKDAIGRYHQCATIQLDFQLPIRFNLTYVSHDGDDKKRPVIVHRAILGSVERMIAILTENYGGKWPFWLSPRQVMVVPVGPTCDEYAQKVRQEFHDAKFMVDIDLDPGCTLNKKIRNAQLAQYNFILVVGEKEKASGTVNIRTRDNKVHGERTVGETVERLQQLKQLRSKQAEEEF.

The interval methionine 1–proline 21 is disordered. The TGS domain maps to aspartate 51–lysine 115. Lysine 215 is subject to N6-acetyllysine. The residue at position 218 (threonine 218) is a Phosphothreonine. A Phosphotyrosine modification is found at tyrosine 270. The residue at position 425 (threonine 425) is a Phosphothreonine.

Belongs to the class-II aminoacyl-tRNA synthetase family. In terms of assembly, homodimer. Post-translationally, ISGylated.

The protein localises to the cytoplasm. It catalyses the reaction tRNA(Thr) + L-threonine + ATP = L-threonyl-tRNA(Thr) + AMP + diphosphate + H(+). Its function is as follows. Catalyzes the attachment of threonine to tRNA(Thr) in a two-step reaction: threonine is first activated by ATP to form Thr-AMP and then transferred to the acceptor end of tRNA(Thr). Also edits incorrectly charged tRNA(Thr) via its editing domain, at the post-transfer stage. The protein is Threonine--tRNA ligase 1, cytoplasmic (Tars1) of Rattus norvegicus (Rat).